The sequence spans 154 residues: 3-dehydroquinate dehydratase (154 aa).

Catalysis depends on Tyr-23, which acts as the Proton acceptor. Substrate contacts are provided by Asn-74, His-80, and Asp-87. The active-site Proton donor is the His-100. Residues Leu-101 to Ser-102 and Arg-111 each bind substrate.

Belongs to the type-II 3-dehydroquinase family. As to quaternary structure, homododecamer.

It carries out the reaction 3-dehydroquinate = 3-dehydroshikimate + H2O. It participates in metabolic intermediate biosynthesis; chorismate biosynthesis; chorismate from D-erythrose 4-phosphate and phosphoenolpyruvate: step 3/7. Its function is as follows. Catalyzes a trans-dehydration via an enolate intermediate. In Actinobacillus pleuropneumoniae serotype 5b (strain L20), this protein is 3-dehydroquinate dehydratase.